We begin with the raw amino-acid sequence, 283 residues long: Shikimate dehydrogenase (NADP(+)) (283 aa).

Residues Ser-16 to Ser-18 and Thr-63 contribute to the shikimate site. The Proton acceptor role is filled by Lys-67. Asp-79 lines the NADP(+) pocket. Residues Asn-88 and Asp-103 each contribute to the shikimate site. NADP(+)-binding positions include Gly-128–Ala-132 and Gly-243.

This sequence belongs to the shikimate dehydrogenase family. As to quaternary structure, homodimer.

It carries out the reaction shikimate + NADP(+) = 3-dehydroshikimate + NADPH + H(+). It participates in metabolic intermediate biosynthesis; chorismate biosynthesis; chorismate from D-erythrose 4-phosphate and phosphoenolpyruvate: step 4/7. Functionally, involved in the biosynthesis of the chorismate, which leads to the biosynthesis of aromatic amino acids. Catalyzes the reversible NADPH linked reduction of 3-dehydroshikimate (DHSA) to yield shikimate (SA). This chain is Shikimate dehydrogenase (NADP(+)), found in Xanthomonas euvesicatoria pv. vesicatoria (strain 85-10) (Xanthomonas campestris pv. vesicatoria).